The chain runs to 470 residues: MNPNQKIITIGSVSLGLVVLNILLHIVSITITVLVLPGNGNNGSCNETVIREYNETVRIEKVTQWHNTNVIEYIERPESDHFMNNTEPLCDVKGFAPFSKDNGIRIGSRGHVFVIREPFVSCSPTECRTFFLTQGSLLNDKHSNGTVKDRSPYRTLMSVEIGQSPNVYQARFEAVAWSATACHDGKKWMTIGVTGPDAKAVAVVHYGGIPTDVIQSWAGDISRTQESSCTCIQGECYWVMTDGPANRQAQYRAFKAKQGKIIGQTEISFNGGHIEECSCYPNEGKVECVCRDNWTGTNRPVLVISSDLSYRVGYLCAGLPSDTPRGEDSQFTGSCTSPMGNQGYGVKGFGFRQGNDVWMGRTISRTSRSGFEVLKVRNGWIQNSKDQIKRQVVVDNLNWSGYSGSFTLPVELTKRSCLVPCFWVEMIRGKPEETTIWTSSSSIVMCGVDHEIADWSWHDGAILPFDIDKM.

Residues 1–14 (MNPNQKIITIGSVS) are Intravirion-facing. The tract at residues 11 to 32 (GSVSLGLVVLNILLHIVSITIT) is involved in apical transport and lipid raft association. A helical transmembrane segment spans residues 15 to 35 (LGLVVLNILLHIVSITITVLV). The segment at 32–86 (TVLVLPGNGNNGSCNETVIREYNETVRIEKVTQWHNTNVIEYIERPESDHFMNNT) is hypervariable stalk region. The Virion surface segment spans residues 36 to 470 (LPGNGNNGSC…AILPFDIDKM (435 aa)). Asn-42, Asn-46, Asn-54, and Asn-84 each carry an N-linked (GlcNAc...) asparagine; by host glycan. The head of neuraminidase stretch occupies residues 89–470 (LCDVKGFAPF…AILPFDIDKM (382 aa)). 8 disulfide bridges follow: Cys-90–Cys-417, Cys-122–Cys-127, Cys-182–Cys-229, Cys-231–Cys-236, Cys-277–Cys-290, Cys-279–Cys-288, Cys-316–Cys-335, and Cys-421–Cys-446. Arg-116 provides a ligand contact to substrate. Residue Asn-144 is glycosylated (N-linked (GlcNAc...) asparagine; by host). Asp-149 (proton donor/acceptor) is an active-site residue. Substrate is bound at residue Arg-150. Residue 275-276 (EE) coordinates substrate. Position 291 (Arg-291) interacts with substrate. Position 292 (Asp-292) interacts with Ca(2+). Asn-293 is a glycosylation site (N-linked (GlcNAc...) asparagine; by host). The Ca(2+) site is built by Gly-296 and Asp-322. Arg-368 is a binding site for substrate. Asn-398 carries N-linked (GlcNAc...) asparagine; by host glycosylation. Catalysis depends on Tyr-402, which acts as the Nucleophile.

Belongs to the glycosyl hydrolase 34 family. As to quaternary structure, homotetramer. Ca(2+) serves as cofactor. N-glycosylated.

It is found in the virion membrane. The protein resides in the host apical cell membrane. It carries out the reaction Hydrolysis of alpha-(2-&gt;3)-, alpha-(2-&gt;6)-, alpha-(2-&gt;8)- glycosidic linkages of terminal sialic acid residues in oligosaccharides, glycoproteins, glycolipids, colominic acid and synthetic substrates.. Its activity is regulated as follows. Inhibited by the neuraminidase inhibitors zanamivir (Relenza) and oseltamivir (Tamiflu). These drugs interfere with the release of progeny virus from infected cells and are effective against all influenza strains. Resistance to neuraminidase inhibitors is quite rare. In terms of biological role, catalyzes the removal of terminal sialic acid residues from viral and cellular glycoconjugates. Cleaves off the terminal sialic acids on the glycosylated HA during virus budding to facilitate virus release. Additionally helps virus spread through the circulation by further removing sialic acids from the cell surface. These cleavages prevent self-aggregation and ensure the efficient spread of the progeny virus from cell to cell. Otherwise, infection would be limited to one round of replication. Described as a receptor-destroying enzyme because it cleaves a terminal sialic acid from the cellular receptors. May facilitate viral invasion of the upper airways by cleaving the sialic acid moieties on the mucin of the airway epithelial cells. Likely to plays a role in the budding process through its association with lipid rafts during intracellular transport. May additionally display a raft-association independent effect on budding. Plays a role in the determination of host range restriction on replication and virulence. Sialidase activity in late endosome/lysosome traffic seems to enhance virus replication. This chain is Neuraminidase, found in Aves (Horse).